The sequence spans 124 residues: MAFKVVVSDSKTGKSYQFETESNALIGKKIGDEISGSIVELEGYKLKITGGSDRCGFAMRHDIHGAMKMRVLLKEGPGYNVKEKGLRRRKSLRGNTISKDITLINTKVVEYGSAPLGGEPESTE.

The protein belongs to the eukaryotic ribosomal protein eS6 family.

The sequence is that of Small ribosomal subunit protein eS6 from Methanococcus maripaludis (strain DSM 14266 / JCM 13030 / NBRC 101832 / S2 / LL).